We begin with the raw amino-acid sequence, 210 residues long: Acyl-homoserine-lactone synthase (210 aa).

This sequence belongs to the autoinducer synthase family.

It catalyses the reaction a fatty acyl-[ACP] + S-adenosyl-L-methionine = an N-acyl-L-homoserine lactone + S-methyl-5'-thioadenosine + holo-[ACP] + H(+). Required for the synthesis of OHHL (N-(3-oxohexanoyl)-L-homoserine lactone), an autoinducer molecule which binds to EsaR. OHHL is necessary for biosynthesis of EPS virulence factor (extracellular heteropolysaccharide) which plays a role in the development of Stewart's wilt on sweet corn. This chain is Acyl-homoserine-lactone synthase (esaI), found in Pantoea stewartii subsp. stewartii (Erwinia stewartii).